Reading from the N-terminus, the 243-residue chain is Orotidine 5'-phosphate decarboxylase (243 aa).

Residues D18, K39, 66–75 (DLKFHDIPAT), T130, R192, Q201, G221, and R222 each bind substrate. The Proton donor role is filled by K68.

It belongs to the OMP decarboxylase family. Type 1 subfamily. Homodimer.

It carries out the reaction orotidine 5'-phosphate + H(+) = UMP + CO2. It functions in the pathway pyrimidine metabolism; UMP biosynthesis via de novo pathway; UMP from orotate: step 2/2. In terms of biological role, catalyzes the decarboxylation of orotidine 5'-monophosphate (OMP) to uridine 5'-monophosphate (UMP). The chain is Orotidine 5'-phosphate decarboxylase from Synechococcus sp. (strain CC9902).